Consider the following 212-residue polypeptide: Large ribosomal subunit protein uL3 (212 aa).

Residues 136–155 (THGNSLSHRSNGSIGQNQTP) are compositionally biased toward polar residues. Residues 136–157 (THGNSLSHRSNGSIGQNQTPGR) form a disordered region. The residue at position 153 (Gln153) is an N5-methylglutamine.

This sequence belongs to the universal ribosomal protein uL3 family. As to quaternary structure, part of the 50S ribosomal subunit. Forms a cluster with proteins L14 and L19. Post-translationally, methylated by PrmB.

One of the primary rRNA binding proteins, it binds directly near the 3'-end of the 23S rRNA, where it nucleates assembly of the 50S subunit. This Shewanella putrefaciens (strain CN-32 / ATCC BAA-453) protein is Large ribosomal subunit protein uL3.